The primary structure comprises 142 residues: Sorting nexin-3 (142 aa).

The region spanning 21–138 is the PX domain; sequence NFLEIEVRNP…AAFVQDPNWD (118 aa). The a 1,2-diacyl-sn-glycero-3-phospho-(1D-myo-inositol-3-phosphate) site is built by Arg64, Ser66, Lys90, Arg95, and Arg104.

It belongs to the sorting nexin family.

The protein localises to the cytoplasm. Its subcellular location is the golgi apparatus membrane. The protein resides in the prevacuolar compartment membrane. Its function is as follows. Required for retention of late Golgi membrane proteins. Component of the retrieval machinery that functions by direct interaction with the cytosolic tails of certain TGN membrane proteins during the sorting/budding process at the prevacuolar compartment. Binds phosphatidylinositol 3-phosphate (PtdIns(P3)). In Neurospora crassa (strain ATCC 24698 / 74-OR23-1A / CBS 708.71 / DSM 1257 / FGSC 987), this protein is Sorting nexin-3 (snx-3).